Reading from the N-terminus, the 637-residue chain is Chaperone protein HtpG (637 aa).

The interval 1–348 (MAEAGQMEKH…SNDLPLNVSR (348 aa)) is a; substrate-binding. The b stretch occupies residues 349–565 (EILQDNKITR…DNDMSTQMAK (217 aa)). Positions 566–637 (LMEAAGQAVP…TRLNKLMLNA (72 aa)) are c.

The protein belongs to the heat shock protein 90 family. Homodimer.

Its subcellular location is the cytoplasm. In terms of biological role, molecular chaperone. Has ATPase activity. The polypeptide is Chaperone protein HtpG (Idiomarina loihiensis (strain ATCC BAA-735 / DSM 15497 / L2-TR)).